Here is a 311-residue protein sequence, read N- to C-terminus: Glycine--tRNA ligase alpha subunit (311 aa).

The protein belongs to the class-II aminoacyl-tRNA synthetase family. As to quaternary structure, tetramer of two alpha and two beta subunits.

It is found in the cytoplasm. It catalyses the reaction tRNA(Gly) + glycine + ATP = glycyl-tRNA(Gly) + AMP + diphosphate. The chain is Glycine--tRNA ligase alpha subunit from Bradyrhizobium diazoefficiens (strain JCM 10833 / BCRC 13528 / IAM 13628 / NBRC 14792 / USDA 110).